We begin with the raw amino-acid sequence, 219 residues long: Large ribosomal subunit protein bL25 (219 aa).

Residues 195–219 (EETTTTETSNEPEVIKKGKKEEEEK) form a disordered region. The span at 197 to 206 (TTTTETSNEP) shows a compositional bias: low complexity. Positions 207 to 219 (EVIKKGKKEEEEK) are enriched in basic and acidic residues.

This sequence belongs to the bacterial ribosomal protein bL25 family. CTC subfamily. Part of the 50S ribosomal subunit; part of the 5S rRNA/L5/L18/L25 subcomplex. Contacts the 5S rRNA. Binds to the 5S rRNA independently of L5 and L18.

Its function is as follows. This is one of the proteins that binds to the 5S RNA in the ribosome where it forms part of the central protuberance. In Fervidobacterium nodosum (strain ATCC 35602 / DSM 5306 / Rt17-B1), this protein is Large ribosomal subunit protein bL25.